A 466-amino-acid polypeptide reads, in one-letter code: Putative chitinase (466 aa).

The signal sequence occupies residues 1-17 (MYLTIWLVSILALGTWG). The GH18 domain occupies 20–380 (FNRFCHYNSW…MAVIHGLNAY (361 aa)). A disulfide bridge connects residues Cys-24 and Cys-49. Catalysis depends on Glu-141, which acts as the Proton donor. Residues 408-442 (NYRRRNQQEKVAEMEQRIRHLEQELQQSMGNMAYE) adopt a coiled-coil conformation.

This sequence belongs to the glycosyl hydrolase 18 family. As to expression, prismatic layer of shell (at protein level). Expressed primarily in the mantle with highest level in the mantle edge and lower level in the mantle pallium.

Its subcellular location is the secreted. It carries out the reaction Random endo-hydrolysis of N-acetyl-beta-D-glucosaminide (1-&gt;4)-beta-linkages in chitin and chitodextrins.. The chain is Putative chitinase from Pinctada maxima (Silver-lipped pearl oyster).